Consider the following 296-residue polypeptide: Polyamine aminopropyltransferase (296 aa).

Residues 5–238 (ELWYETLHAN…GIMTFAWATQ (234 aa)) enclose the PABS domain. S-methyl-5'-thioadenosine is bound at residue Q33. Spermidine contacts are provided by H64 and D88. Residues E108 and 140 to 141 (DG) contribute to the S-methyl-5'-thioadenosine site. D158 (proton acceptor) is an active-site residue. 158-161 (DCTD) lines the spermidine pocket. Residue P165 coordinates S-methyl-5'-thioadenosine.

It belongs to the spermidine/spermine synthase family. As to quaternary structure, homodimer or homotetramer.

Its subcellular location is the cytoplasm. It catalyses the reaction S-adenosyl 3-(methylsulfanyl)propylamine + putrescine = S-methyl-5'-thioadenosine + spermidine + H(+). It participates in amine and polyamine biosynthesis; spermidine biosynthesis; spermidine from putrescine: step 1/1. Its function is as follows. Catalyzes the irreversible transfer of a propylamine group from the amino donor S-adenosylmethioninamine (decarboxy-AdoMet) to putrescine (1,4-diaminobutane) to yield spermidine. This Yersinia pestis bv. Antiqua (strain Antiqua) protein is Polyamine aminopropyltransferase.